The chain runs to 414 residues: Serine hydroxymethyltransferase (414 aa).

Residues Leu-117 and 121–123 (GHL) contribute to the (6S)-5,6,7,8-tetrahydrofolate site. Position 226 is an N6-(pyridoxal phosphate)lysine (Lys-226). 349-351 (SPF) provides a ligand contact to (6S)-5,6,7,8-tetrahydrofolate.

The protein belongs to the SHMT family. In terms of assembly, homodimer. It depends on pyridoxal 5'-phosphate as a cofactor.

Its subcellular location is the cytoplasm. The catalysed reaction is (6R)-5,10-methylene-5,6,7,8-tetrahydrofolate + glycine + H2O = (6S)-5,6,7,8-tetrahydrofolate + L-serine. Its pathway is one-carbon metabolism; tetrahydrofolate interconversion. It functions in the pathway amino-acid biosynthesis; glycine biosynthesis; glycine from L-serine: step 1/1. In terms of biological role, catalyzes the reversible interconversion of serine and glycine with tetrahydrofolate (THF) serving as the one-carbon carrier. Also exhibits THF-independent aldolase activity toward beta-hydroxyamino acids, producing glycine and aldehydes, via a retro-aldol mechanism. The protein is Serine hydroxymethyltransferase of Methanospirillum hungatei JF-1 (strain ATCC 27890 / DSM 864 / NBRC 100397 / JF-1).